The following is a 130-amino-acid chain: Small ribosomal subunit protein uS9 (130 aa).

Belongs to the universal ribosomal protein uS9 family.

This Aliivibrio salmonicida (strain LFI1238) (Vibrio salmonicida (strain LFI1238)) protein is Small ribosomal subunit protein uS9.